The sequence spans 431 residues: Synaptotagmin-11 (431 aa).

Residues 1 to 15 (MAEITNIRPSFDVSP) lie on the Vesicular side of the membrane. Residues 16 to 36 (VVAGLIGASVLVVCVSVTVFV) form a helical membrane-spanning segment. Over 37–431 (WSCCHQQAEK…VAKWHSLSEY (395 aa)) the chain is Cytoplasmic. Ser134 is modified (phosphoserine). The disordered stretch occupies residues 134-154 (SPITSLTPGESKTTSPSSPEE). Positions 140-151 (TPGESKTTSPSS) are enriched in low complexity. C2 domains lie at 157-279 (MLGS…QLTR) and 291-426 (SRGE…AKWH). Ca(2+) is bound by residues Asp250, Ser253, and Asp256.

This sequence belongs to the synaptotagmin family. As to quaternary structure, homodimer. Can also form heterodimers. Interacts with PRKN. Interacts (via C2 2 domain) with AGO2 and SND1; the interaction with SND1 is direct. Interacts with KIF1A; the interaction increases in presence of calcium. Requires Ca(2+) as cofactor. In terms of processing, ubiquitinated, at least by PRKN, and targeted to the proteasome complex for degradation. Ubiquitination is inhibited by ATP13A2.

The protein resides in the cytoplasmic vesicle membrane. The protein localises to the perikaryon. Its subcellular location is the golgi apparatus. It localises to the trans-Golgi network membrane. It is found in the recycling endosome membrane. The protein resides in the lysosome membrane. The protein localises to the cytoplasmic vesicle. Its subcellular location is the phagosome. It localises to the cell projection. It is found in the axon. The protein resides in the dendrite. The protein localises to the postsynaptic density. Its subcellular location is the clathrin-coated vesicle membrane. In terms of biological role, synaptotagmin family member involved in vesicular and membrane trafficking which does not bind Ca(2+). Inhibits clathrin-mediated and bulk endocytosis, functions to ensure precision in vesicle retrieval. Plays an important role in dopamine transmission by regulating endocytosis and the vesicle-recycling process. Essential component of a neuronal vesicular trafficking pathway that differs from the synaptic vesicle trafficking pathway but is crucial for development and synaptic plasticity. In macrophages and microglia, inhibits the conventional cytokine secretion, of at least IL6 and TNF, and phagocytosis. In astrocytes, regulates lysosome exocytosis, mechanism required for the repair of injured astrocyte cell membrane. Required for the ATP13A2-mediated regulation of the autophagy-lysosome pathway. This chain is Synaptotagmin-11, found in Homo sapiens (Human).